The chain runs to 288 residues: UAP56-interacting factor (288 aa).

Positions threonine 11–glutamate 29 match the UAP56-binding motif motif. Positions aspartate 183–serine 202 are disordered.

Belongs to the UIF family.

Its subcellular location is the nucleus. It localises to the nucleoplasm. It is found in the nucleus speckle. Required for mRNA export from the nucleus to the cytoplasm. Acts as an adapter that uses the ddx39b/uap56-nfx1 pathway to ensure efficient mRNA export and delivering to the nuclear pore. This is UAP56-interacting factor (fyttd1) from Xenopus laevis (African clawed frog).